The sequence spans 548 residues: Uridine-cytidine kinase-like 1 (548 aa).

Residues 1-18 (MAAPPASMSAAPSPLQSA) show a composition bias toward low complexity. The interval 1-74 (MAAPPASMSA…CKSEPPLLRT (74 aa)) is disordered. S56 and S63 each carry phosphoserine. ATP is bound at residue 105 to 112 (GGSASGKT). A Phosphoserine modification is found at S539.

This sequence belongs to the uridine kinase family. Interacts with RNF19B. In terms of processing, ubiquitinated by RNF19B; which induces proteasomal degradation.

Its subcellular location is the cytoplasm. The protein resides in the nucleus. It carries out the reaction uridine + ATP = UMP + ADP + H(+). It catalyses the reaction cytidine + ATP = CMP + ADP + H(+). Its pathway is pyrimidine metabolism; UMP biosynthesis via salvage pathway; UMP from uridine: step 1/1. May contribute to UTP accumulation needed for blast transformation and proliferation. The polypeptide is Uridine-cytidine kinase-like 1 (Uckl1) (Mus musculus (Mouse)).